Reading from the N-terminus, the 344-residue chain is MDFAISLPDPGLTAAIQHRIDRKTKPLGALGRIEALALQLGLIQQTAAPRIRQPHVLVFAGDHGAARAGISAFPQDVTWQMVENFLAGGAAVNVFCRQTELALTVIDSGVNHDFGRRDGLVDAKIAPGTANYIETPAMSAQQRDAALARGRELAHALAVNGCNLVGFGEMGIGNTASASLLTHCLTGIDLATVTGRGTGLDDAGLARKHRLLAQALARGGRPSDPLGALAEYGGFEIAMMAGAMLGAAEKRMTLLIDGFIVTSALLVAQAIAPAILPYCVFAHRSKEPGHTAQLAHLRVEPLMELDLRLGEGTGAALAFPLVQAAANFLNDMASFDSAGVDDRV.

The Proton acceptor role is filled by Glu-311.

This sequence belongs to the CobT family.

The enzyme catalyses 5,6-dimethylbenzimidazole + nicotinate beta-D-ribonucleotide = alpha-ribazole 5'-phosphate + nicotinate + H(+). The protein operates within nucleoside biosynthesis; alpha-ribazole biosynthesis; alpha-ribazole from 5,6-dimethylbenzimidazole: step 1/2. Its function is as follows. Catalyzes the synthesis of alpha-ribazole-5'-phosphate from nicotinate mononucleotide (NAMN) and 5,6-dimethylbenzimidazole (DMB). This is Nicotinate-nucleotide--dimethylbenzimidazole phosphoribosyltransferase from Aromatoleum aromaticum (strain DSM 19018 / LMG 30748 / EbN1) (Azoarcus sp. (strain EbN1)).